Consider the following 1881-residue polypeptide: Nuclear pore membrane glycoprotein 210-like (1881 aa).

A signal peptide spans 1 to 32 (MIAFGAPRRRSFGLLFSLAPHLFFLFLIGTLA). N-linked (GlcNAc...) asparagine glycans are attached at residues Asn80, Asn344, and Asn808. The 73-residue stretch at 1078 to 1150 (FPPFRLIPEK…TIQTVNEDTG (73 aa)) folds into the BIG2 domain. A glycan (N-linked (GlcNAc...) asparagine) is linked at Asn1441. The chain crosses the membrane as a helical span at residues 1804–1824 (YQILLFTLFAVLASTSFIFLA).

The protein belongs to the NUP210 family. In terms of tissue distribution, expressed in testis.

It is found in the nucleus membrane. The protein resides in the nucleus. It localises to the nucleoplasm. The polypeptide is Nuclear pore membrane glycoprotein 210-like (Nup210l) (Mus musculus (Mouse)).